Here is a 127-residue protein sequence, read N- to C-terminus: Protein LLP homolog (127 aa).

Over residues 1–21 (MAKSLRSKWKRKMRAEKRKKN) the composition is skewed to basic residues. The interval 1-24 (MAKSLRSKWKRKMRAEKRKKNAPK) is disordered. Residues Lys65 and Lys72 each participate in a glycyl lysine isopeptide (Lys-Gly) (interchain with G-Cter in SUMO2) cross-link. Basic residues predominate over residues 98–120 (RQRKRLKAKRERKKGKSKVKAMK). Residues 98–127 (RQRKRLKAKRERKKGKSKVKAMKAAKGLTW) form a disordered region.

This sequence belongs to the learning-associated protein family. Interacts with CTCF, MYO1C and with the transcriptional machinery, including RNA polymerase II and TBP.

The protein resides in the nucleus. The protein localises to the nucleolus. Its subcellular location is the chromosome. In terms of biological role, in hippocampal neurons, regulates dendritic and spine growth and synaptic transmission. This Bos taurus (Bovine) protein is Protein LLP homolog (LLPH).